The following is a 259-amino-acid chain: MLVVISPAKRLDWAERDVPVTQPDFQEDAVRLSKTARNLTLGSLKSLMGLSDDLARLNRDRFNAFAEDPAPEATRPAALAFAGDTYQGLEATSLDENERAWAQDHLRILSGLYGVLRPLDAIQPYRLEMGSRLKTRRGSNLYEYWRDDLSKALNAQAQSVGTDVLINCASQEYFGAVAPKALKLRVITPAFMEDKNDGKGPKIVSFFAKKARGAMARFVIQNRLSDPDALTGFDTGGYAYQPELSTPDKPVFIRPYPAS.

The protein belongs to the UPF0246 family.

In Roseobacter denitrificans (strain ATCC 33942 / OCh 114) (Erythrobacter sp. (strain OCh 114)), this protein is UPF0246 protein RD1_0358.